The following is a 963-amino-acid chain: Iron-responsive element-binding protein 2 (963 aa).

[4Fe-4S] cluster is bound by residues C512, C578, and C581.

Belongs to the aconitase/IPM isomerase family. Interacts with RBCK1 only in iron-rich conditions. Interacts (when associated with the 4Fe-4S) with FBXL5. Interacts with CIAO1 and CIAO2A. Requires [4Fe-4S] cluster as cofactor. Ubiquitinated and degraded by the proteasome in presence of high level of iron and oxygen. Ubiquitinated by a SCF complex containing FBXL5. Upon iron and oxygen depletion FBXL5 is degraded, preventing ubiquitination and allowing its RNA-binding activity. In terms of tissue distribution, ubiquitously expressed in rat tissues, the highest amounts present in skeletal muscle and heart.

The protein localises to the cytoplasm. RNA-binding protein that binds to iron-responsive elements (IRES), which are stem-loop structures found in the 5'-UTR of ferritin, and delta aminolevulinic acid synthase mRNAs, and in the 3'-UTR of transferrin receptor mRNA. Binding to the IRE element in ferritin results in the repression of its mRNA translation. Binding of the protein to the transferrin receptor mRNA inhibits the degradation of this otherwise rapidly degraded mRNA. This chain is Iron-responsive element-binding protein 2 (Ireb2), found in Rattus norvegicus (Rat).